A 253-amino-acid polypeptide reads, in one-letter code: MIVHQQLPMSVNVASLDFLLIELVHTAKRLAEDRKKKSSSEKSIESDFQMLESIGFQVGRKITERLLLNRNRITETTDVMRFLCRELWPIVFRKPLDNLKTNRRGIFVLTDTYFYWFTKMTAMTGTEMAQITTPYFYFPSGFIRGVVYTFGYSAQVIAQCPNLPTCIFHVKFSPNPTQTSPGKPSTSESSQTDTSTRPANSQTPTTTRASSYTTLVSTSNQVSNEAEASAVETSANQAQNTEDATENEDRLPS.

Polar residues predominate over residues 175 to 184 (NPTQTSPGKP). The tract at residues 175–253 (NPTQTSPGKP…ATENEDRLPS (79 aa)) is disordered. A Phosphoserine modification is found at S180. Composition is skewed to low complexity over residues 185-196 (STSESSQTDTST) and 203-214 (TPTTTRASSYTT). Residues 215–242 (LVSTSNQVSNEAEASAVETSANQAQNTE) show a composition bias toward polar residues.

It belongs to the TRAPP small subunits family. BET3 subfamily.

This is an uncharacterized protein from Schizosaccharomyces pombe (strain 972 / ATCC 24843) (Fission yeast).